The primary structure comprises 510 residues: MSAKKPLALVILDGYGYREDTASNAIANAKTPVMDALIANNPNTLISASGMDVGLPDGQMGNSEVGHTNIGAGRVVYQDLTRITKSIADGEFAETAALVEAIDSAVKAEKAVHIMGLMSPGGVHSHEDHIYAAVEMAAARGAEKIYLHCFLDGRDTPPRSAENSLQRFQDLFAKLGKGRVASLVGRYYAMDRDNNWDRVQVAYDLLTQAKAEFTAETAVAGLEAAYAREENDEFVKATAIKAEGQEDAIMQDGDAVIFMNYRADRARQITRAFVPAFDGFERAVFPAINFVMLTQYAADIPLAIAFPPASLENTYGEWLSKQGQTQLRISETEKYAHVTFFFNGGIENEFEGEERQLVASPKVATYDMQPEMSSPELTEKMVAAIKSGKYDTIICNYPNADMVGHTGVYEAAEQAIEALDESVGKVVEAIKEVSGQMLITADHGNAEMMIDPETGGVHTAHTNLPVPLIYVGDKAVEFKEGGKLSDLAPTMLSLAGLEIPAEMSGEVLVK.

Mn(2+)-binding residues include Asp13 and Ser63. The Phosphoserine intermediate role is filled by Ser63. Residues His124, 154 to 155 (RD), Arg186, Arg192, 262 to 265 (RADR), and Lys334 contribute to the substrate site. Mn(2+)-binding residues include Asp401, His405, Asp442, His443, and His461.

Belongs to the BPG-independent phosphoglycerate mutase family. As to quaternary structure, monomer. The cofactor is Mn(2+).

The enzyme catalyses (2R)-2-phosphoglycerate = (2R)-3-phosphoglycerate. Its pathway is carbohydrate degradation; glycolysis; pyruvate from D-glyceraldehyde 3-phosphate: step 3/5. Functionally, catalyzes the interconversion of 2-phosphoglycerate and 3-phosphoglycerate. This chain is 2,3-bisphosphoglycerate-independent phosphoglycerate mutase, found in Vibrio campbellii (strain ATCC BAA-1116).